The following is a 297-amino-acid chain: Manganese efflux system protein MneP (297 aa).

6 helical membrane passes run 12–32 (VALIALIANLILMAGKVFFGL), 43–63 (GIHSAADVVASIAVLAVIGIS), 85–105 (IVGIILVIVSVYILIEAILSF), 111–131 (VPQYSALFAALISYVAKEILY), 155–175 (GDIVASLAAFIGVLLAIIGNS), and 177–197 (GWSYLLYADAIASAIVAYLIF).

Belongs to the cation diffusion facilitator (CDF) transporter (TC 2.A.4) family.

Its subcellular location is the cell membrane. Functionally, primary efflux pump for manganese. May prevent manganese intoxication. This is Manganese efflux system protein MneP from Bacillus subtilis (strain 168).